The following is a 359-amino-acid chain: Alpha-2-HS-glycoprotein (359 aa).

Positions 1–18 (MKSFVLLFCLAQLWGCHS) are cleaved as a signal peptide. Positions 27-133 (YKEPACDDPD…QFSVLFTKCD (107 aa)) constitute a Cystatin fetuin-A-type 1 domain. Disulfide bonds link Cys32/Cys350, Cys89/Cys100, Cys114/Cys132, Cys146/Cys149, Cys208/Cys219, and Cys230/Cys248. Asn99 is a glycosylation site (N-linked (GlcNAc...) asparagine). A phosphoserine mark is found at Ser134, Ser135, and Ser138. Positions 144 to 256 (KLCPDCPLLA…TCTLFQTQPV (113 aa)) constitute a Cystatin fetuin-A-type 2 domain. 2 N-linked (GlcNAc...) asparagine glycosylation sites follow: Asn156 and Asn176. The tract at residues 257–285 (IPQPQPDGAEAEAPSAVPDAAGPTPSAAG) is disordered. Ser271 carries O-linked (GalNAc...) serine glycosylation. Residues 276–285 (AAGPTPSAAG) show a composition bias toward low complexity. Thr280 is a glycosylation site (O-linked (GalNAc...) threonine). O-linked (GalNAc...) serine glycosylation is found at Ser282 and Ser296. Thr314 is subject to Phosphothreonine. Ser316, Ser320, Ser323, and Ser325 each carry phosphoserine. A glycan (O-linked (GalNAc...) threonine) is linked at Thr334. Ser341 is a glycosylation site (O-linked (GalNAc...) serine; partial).

It belongs to the fetuin family. Phosphorylated by FAM20C in the extracellular medium. As to expression, liver and bone.

The protein localises to the secreted. Functionally, promotes endocytosis, possesses opsonic properties and influences the mineral phase of bone. Suggested to have lymphocyte stimulating properties, lipid binding capability and to bind thyroid hormone. The protein is Alpha-2-HS-glycoprotein (AHSG) of Bos taurus (Bovine).